The sequence spans 360 residues: Phosphoserine aminotransferase (360 aa).

R42 lines the L-glutamate pocket. Pyridoxal 5'-phosphate contacts are provided by W102, T152, D171, and Q194. N6-(pyridoxal phosphate)lysine is present on K195. 237–238 (NT) contacts pyridoxal 5'-phosphate.

This sequence belongs to the class-V pyridoxal-phosphate-dependent aminotransferase family. SerC subfamily. In terms of assembly, homodimer. It depends on pyridoxal 5'-phosphate as a cofactor.

Its subcellular location is the cytoplasm. It catalyses the reaction O-phospho-L-serine + 2-oxoglutarate = 3-phosphooxypyruvate + L-glutamate. The enzyme catalyses 4-(phosphooxy)-L-threonine + 2-oxoglutarate = (R)-3-hydroxy-2-oxo-4-phosphooxybutanoate + L-glutamate. The protein operates within amino-acid biosynthesis; L-serine biosynthesis; L-serine from 3-phospho-D-glycerate: step 2/3. Its pathway is cofactor biosynthesis; pyridoxine 5'-phosphate biosynthesis; pyridoxine 5'-phosphate from D-erythrose 4-phosphate: step 3/5. Its function is as follows. Catalyzes the reversible conversion of 3-phosphohydroxypyruvate to phosphoserine and of 3-hydroxy-2-oxo-4-phosphonooxybutanoate to phosphohydroxythreonine. This Coxiella burnetii (strain RSA 331 / Henzerling II) protein is Phosphoserine aminotransferase.